The sequence spans 20 residues: Trypsin inhibitor (20 aa).

Residues 1–20 (APSDTTIAETLTITEEFFPD) form a disordered region.

Hemolymph.

It localises to the secreted. The protein resides in the extracellular space. Functionally, inhibits trypsin stoichiometrically. Also inhibits chymotrypsin very weakly. The protein is Trypsin inhibitor of Mythimna unipuncta (Armyworm moth).